A 31-amino-acid chain; its full sequence is GLFLDTLKGAAKDVAGKLLEGLKCKIAGCKP.

An intrachain disulfide couples Cys24 to Cys29.

Expressed by the skin glands.

The protein localises to the secreted. Functionally, antibacterial activity against Gram-positive bacterium S.aureus and Gram-negative bacterium E.coli. Has activity against C.albicans. This chain is Ranatuerin-2Ca, found in Lithobates clamitans (Green frog).